A 357-amino-acid polypeptide reads, in one-letter code: Actin, macronuclear (357 aa).

It belongs to the actin family. Post-translationally, met-1 may be removed after translation.

The protein localises to the cytoplasm. It is found in the cytoskeleton. The catalysed reaction is ATP + H2O = ADP + phosphate + H(+). Its function is as follows. Actins are highly conserved proteins that are involved in various types of cell motility and are ubiquitously expressed in all eukaryotic cells. This chain is Actin, macronuclear, found in Oxytricha fallax.